Reading from the N-terminus, the 216-residue chain is Pyrrolidone-carboxylate peptidase (216 aa).

Catalysis depends on residues glutamate 80, cysteine 143, and histidine 168.

This sequence belongs to the peptidase C15 family. In terms of assembly, homotetramer.

It localises to the cytoplasm. It catalyses the reaction Release of an N-terminal pyroglutamyl group from a polypeptide, the second amino acid generally not being Pro.. In terms of biological role, removes 5-oxoproline from various penultimate amino acid residues except L-proline. In Cupriavidus necator (strain ATCC 17699 / DSM 428 / KCTC 22496 / NCIMB 10442 / H16 / Stanier 337) (Ralstonia eutropha), this protein is Pyrrolidone-carboxylate peptidase.